We begin with the raw amino-acid sequence, 73 residues long: Frenatin 3.1 (73 aa).

The first 22 residues, 1–22 (MHFLKKSIFLVLFLGLVSLSIC), serve as a signal peptide directing secretion. The propeptide occupies 23-46 (EKEKREDQNEEEVDENEEASEEKR). The interval 25–45 (EKREDQNEEEVDENEEASEEK) is disordered. Over residues 30-42 (QNEEEVDENEEAS) the composition is skewed to acidic residues.

In terms of tissue distribution, expressed by the skin glands.

It localises to the secreted. Its function is as follows. Antimicrobial peptide with activity against both Gram-positive and Gram-negative bacteria. This is Frenatin 3.1 from Nyctimystes infrafrenatus (White-lipped tree frog).